The sequence spans 29 residues: Cyclotide mela-3 (29 aa).

The segment at residues 1 to 29 is a cross-link (cyclopeptide (Gly-Asp)); that stretch reads GKPICGETCFKGKCYTPGCTCSYPICKKD. 3 disulfide bridges follow: C5–C19, C9–C21, and C14–C26.

In terms of processing, this is a cyclic peptide. Post-translationally, contains 3 disulfide bonds.

In terms of biological role, probably participates in a plant defense mechanism (Potential). Binds to and induces leakage in phospholipd membranes, particularly ones containing 1-palmitoyl-2-oleophosphatidylethanolamine (POPE). In vitro, displays cytotoxicity against cultured cells. Not active against Gram-negative bacterium E.coli ATCC 25922 or Gram-positive bacterium S.aureus ATCC 25923 up to a concentration of 64 uM. This is Cyclotide mela-3 from Melicytus latifolius (Norfolk Island mahoe).